Consider the following 85-residue polypeptide: Conotoxin Mi15b (85 aa).

An N-terminal signal peptide occupies residues 1 to 23; the sequence is MEKLTVLILVAIVLLTIQVLGQS. Positions 24–49 are excised as a propeptide; that stretch reads DRDKHPKRRPRQYATKRLSALMKGHR. Residue glutamine 50 is modified to Pyrrolidone carboxylic acid.

This sequence belongs to the conotoxin O2 superfamily. Contains 4 disulfide bonds. As to expression, expressed by the venom duct.

The protein localises to the secreted. This chain is Conotoxin Mi15b, found in Conus miles (Soldier cone).